The primary structure comprises 163 residues: Nucleotide-binding protein syc0675_c (163 aa).

The protein belongs to the YajQ family.

Functionally, nucleotide-binding protein. This chain is Nucleotide-binding protein syc0675_c, found in Synechococcus sp. (strain ATCC 27144 / PCC 6301 / SAUG 1402/1) (Anacystis nidulans).